The chain runs to 367 residues: NADH-ubiquinone oxidoreductase chain 1 (367 aa).

10 consecutive transmembrane segments (helical) span residues 5–25 (IIISLIEVVLVLVPALLGIAY), 43–63 (PNFVGYYGLLQAFADALKLLL), 74–94 (IILFFLGPVITLIFSLLGYAV), 108–128 (LGIYYILAVSSLATYGILLAG), 152–172 (LVLSSAILLVIMLTGSLNLSV), 179–199 (AIWNIFPLLPVFIIFFIGSVA), 225–245 (AVVFVFFFLAEYGSIVLMCIL), 265–285 (FFYSILFNIGFIDLNFFNIFY), 301–321 (LIYGLTIGLKSSILIFLFIWV), and 336–356 (FCWTVLLPLLFALIVLLPCIL).

This sequence belongs to the complex I subunit 1 family.

It is found in the mitochondrion inner membrane. It carries out the reaction a ubiquinone + NADH + 5 H(+)(in) = a ubiquinol + NAD(+) + 4 H(+)(out). Its function is as follows. Core subunit of the mitochondrial membrane respiratory chain NADH dehydrogenase (Complex I) that is believed to belong to the minimal assembly required for catalysis. Complex I functions in the transfer of electrons from NADH to the respiratory chain. The immediate electron acceptor for the enzyme is believed to be ubiquinone. In Podospora anserina (strain S / ATCC MYA-4624 / DSM 980 / FGSC 10383) (Pleurage anserina), this protein is NADH-ubiquinone oxidoreductase chain 1 (ND1).